A 161-amino-acid polypeptide reads, in one-letter code: Cyclic pyranopterin monophosphate synthase (161 aa).

Substrate-binding positions include 75–77 (MCH) and 115–116 (ME). Residue aspartate 130 is part of the active site.

It belongs to the MoaC family. As to quaternary structure, homohexamer; trimer of dimers.

It catalyses the reaction (8S)-3',8-cyclo-7,8-dihydroguanosine 5'-triphosphate = cyclic pyranopterin phosphate + diphosphate. The protein operates within cofactor biosynthesis; molybdopterin biosynthesis. Its function is as follows. Catalyzes the conversion of (8S)-3',8-cyclo-7,8-dihydroguanosine 5'-triphosphate to cyclic pyranopterin monophosphate (cPMP). This is Cyclic pyranopterin monophosphate synthase from Bacillus cereus (strain G9842).